The chain runs to 281 residues: Predicted GPI-anchored protein 39 (281 aa).

The N-terminal stretch at 1 to 18 (MKATTFTLLLSIATAINA) is a signal peptide. Disordered stretches follow at residues 52–94 (HHHG…SASV) and 106–227 (VSVS…SSSE). Composition is skewed to low complexity over residues 69-94 (SSSS…SASV), 106-158 (VSVS…STTD), 167-203 (ATDS…IEET), and 210-227 (SVPS…SSSE). Asn150 is a glycosylation site (N-linked (GlcNAc...) asparagine). N-linked (GlcNAc...) asparagine glycans are attached at residues Asn239, Asn246, Asn249, and Asn252. A lipid anchor (GPI-anchor amidated serine) is attached at Ser256. Residues 257–281 (ANFAIQYGTDYGVAVVAAIVGALLI) constitute a propeptide, removed in mature form.

The protein localises to the cell membrane. This Candida albicans (strain SC5314 / ATCC MYA-2876) (Yeast) protein is Predicted GPI-anchored protein 39 (PGA39).